Consider the following 162-residue polypeptide: Glutathione peroxidase-like peroxiredoxin 2 (162 aa).

Cysteine 37 functions as the Cysteine sulfenic acid (-SOH) intermediate in the catalytic mechanism. An intrachain disulfide couples cysteine 37 to cysteine 83.

This sequence belongs to the glutathione peroxidase family. As to quaternary structure, monomer.

It localises to the cytoplasm. Its subcellular location is the nucleus. The protein localises to the mitochondrion outer membrane. The protein resides in the mitochondrion inner membrane. It carries out the reaction a hydroperoxide + [thioredoxin]-dithiol = an alcohol + [thioredoxin]-disulfide + H2O. Functionally, glutathione peroxidase-like protein that protects cells from phospholipid hydroperoxides and nonphospholipid peroxides during oxidative stress. Plays an important role in the oxidative stress-induced response in the presence of Ca(2+). Has peroxidase activity using preferentially thioredoxin as a reducing power. The redox state of the mitochondrial GPX2 is regulated by TRX1 and TRX2 (cytoplasmic thioredoxin), and by TRX3 (mitochondrial matrix thioredoxin). Involved in sporulation. The protein is Glutathione peroxidase-like peroxiredoxin 2 of Saccharomyces cerevisiae (strain ATCC 204508 / S288c) (Baker's yeast).